The chain runs to 195 residues: 4'-phosphopantetheinyl transferase AcpT (195 aa).

It belongs to the P-Pant transferase superfamily. Gsp/Sfp/HetI/AcpT family.

The enzyme catalyses apo-[ACP] + CoA = holo-[ACP] + adenosine 3',5'-bisphosphate + H(+). May be involved in an alternative pathway for phosphopantetheinyl transfer and holo-ACP synthesis in E.coli. The native apo-protein substrate is unknown. Is able to functionally replace AcpS in vivo but only when expressed at high levels. This chain is 4'-phosphopantetheinyl transferase AcpT, found in Escherichia coli (strain K12).